Reading from the N-terminus, the 258-residue chain is UPF0246 protein HS_0482 (258 aa).

This sequence belongs to the UPF0246 family.

This is UPF0246 protein HS_0482 from Histophilus somni (strain 129Pt) (Haemophilus somnus).